Reading from the N-terminus, the 120-residue chain is UPF0231 protein ETA_08290 (120 aa).

The protein belongs to the UPF0231 family.

The sequence is that of UPF0231 protein ETA_08290 from Erwinia tasmaniensis (strain DSM 17950 / CFBP 7177 / CIP 109463 / NCPPB 4357 / Et1/99).